We begin with the raw amino-acid sequence, 332 residues long: Ribosomal RNA small subunit methyltransferase C (332 aa).

The protein belongs to the methyltransferase superfamily. RsmC family. As to quaternary structure, monomer.

The protein localises to the cytoplasm. The catalysed reaction is guanosine(1207) in 16S rRNA + S-adenosyl-L-methionine = N(2)-methylguanosine(1207) in 16S rRNA + S-adenosyl-L-homocysteine + H(+). Functionally, specifically methylates the guanine in position 1207 of 16S rRNA in the 30S particle. The polypeptide is Ribosomal RNA small subunit methyltransferase C (Pseudomonas putida (strain ATCC 47054 / DSM 6125 / CFBP 8728 / NCIMB 11950 / KT2440)).